A 109-amino-acid chain; its full sequence is Mitochondrial pyruvate carrier 1 (109 aa).

Ala2 bears the N-acetylalanine mark. Over 2 to 20 (AGALVRKAADYVRSKDFRD) the chain is Mitochondrial matrix. A helical membrane pass occupies residues 21–41 (YLMSTHFWGPVANWGLPIAAI). Residues 42–52 (NDMKKSPEIIS) are Mitochondrial intermembrane-facing. A helical transmembrane segment spans residues 53 to 71 (GRMTFALCCYSLTFMRFAY). Lys72 is subject to N6-acetyllysine. Residues 72 to 109 (KVQPRNWLLFACHVTNEVAQLIQGGRLINYEMSKRPSA) lie on the Mitochondrial matrix side of the membrane.

It belongs to the mitochondrial pyruvate carrier (MPC) (TC 2.A.105) family. In terms of assembly, homodimer. Forms heterodimer with MPC2. The heterodimer is the more stable and dominant form.

The protein localises to the mitochondrion inner membrane. The enzyme catalyses pyruvate(out) + H(+)(out) = pyruvate(in) + H(+)(in). In terms of biological role, mediates the uptake of pyruvate into mitochondria. This chain is Mitochondrial pyruvate carrier 1 (Mpc1), found in Mus musculus (Mouse).